We begin with the raw amino-acid sequence, 144 residues long: Large ribosomal subunit protein uL22 (144 aa).

A compositionally biased stretch (basic residues) spans 124–137 (RLKKRVLGQNKRKQ). The segment at 124–144 (RLKKRVLGQNKRKQSVSGEKK) is disordered.

This sequence belongs to the universal ribosomal protein uL22 family. Part of the 50S ribosomal subunit.

This protein binds specifically to 23S rRNA; its binding is stimulated by other ribosomal proteins, e.g. L4, L17, and L20. It is important during the early stages of 50S assembly. It makes multiple contacts with different domains of the 23S rRNA in the assembled 50S subunit and ribosome. In terms of biological role, the globular domain of the protein is located near the polypeptide exit tunnel on the outside of the subunit, while an extended beta-hairpin is found that lines the wall of the exit tunnel in the center of the 70S ribosome. The polypeptide is Large ribosomal subunit protein uL22 (Mycoplasmoides gallisepticum (strain R(low / passage 15 / clone 2)) (Mycoplasma gallisepticum)).